The sequence spans 391 residues: Formate-dependent phosphoribosylglycinamide formyltransferase (391 aa).

N(1)-(5-phospho-beta-D-ribosyl)glycinamide is bound by residues 18–19 (EL) and E78. ATP is bound by residues R110, K151, 156–161 (SSGKGQ), 191–194 (EEFI), and E199. Positions 115–305 (DLAAQQLGLR…EFELHLRAVL (191 aa)) constitute an ATP-grasp domain. Residues E264 and E276 each contribute to the Mg(2+) site. N(1)-(5-phospho-beta-D-ribosyl)glycinamide-binding positions include D283, K353, and 360 to 361 (RR).

Belongs to the PurK/PurT family. Homodimer.

It catalyses the reaction N(1)-(5-phospho-beta-D-ribosyl)glycinamide + formate + ATP = N(2)-formyl-N(1)-(5-phospho-beta-D-ribosyl)glycinamide + ADP + phosphate + H(+). Its pathway is purine metabolism; IMP biosynthesis via de novo pathway; N(2)-formyl-N(1)-(5-phospho-D-ribosyl)glycinamide from N(1)-(5-phospho-D-ribosyl)glycinamide (formate route): step 1/1. Functionally, involved in the de novo purine biosynthesis. Catalyzes the transfer of formate to 5-phospho-ribosyl-glycinamide (GAR), producing 5-phospho-ribosyl-N-formylglycinamide (FGAR). Formate is provided by PurU via hydrolysis of 10-formyl-tetrahydrofolate. This is Formate-dependent phosphoribosylglycinamide formyltransferase from Synechococcus elongatus (strain ATCC 33912 / PCC 7942 / FACHB-805) (Anacystis nidulans R2).